A 360-amino-acid chain; its full sequence is Histidinol-phosphate aminotransferase (360 aa).

At Lys222 the chain carries N6-(pyridoxal phosphate)lysine.

The protein belongs to the class-II pyridoxal-phosphate-dependent aminotransferase family. Histidinol-phosphate aminotransferase subfamily. Homodimer. The cofactor is pyridoxal 5'-phosphate.

It carries out the reaction L-histidinol phosphate + 2-oxoglutarate = 3-(imidazol-4-yl)-2-oxopropyl phosphate + L-glutamate. It functions in the pathway amino-acid biosynthesis; L-histidine biosynthesis; L-histidine from 5-phospho-alpha-D-ribose 1-diphosphate: step 7/9. The protein is Histidinol-phosphate aminotransferase of Listeria monocytogenes serotype 4b (strain CLIP80459).